A 293-amino-acid polypeptide reads, in one-letter code: Ribosomal protein L11 methyltransferase (293 aa).

S-adenosyl-L-methionine is bound by residues Thr145, Gly166, Asp188, and Asn230.

This sequence belongs to the methyltransferase superfamily. PrmA family.

The protein localises to the cytoplasm. The catalysed reaction is L-lysyl-[protein] + 3 S-adenosyl-L-methionine = N(6),N(6),N(6)-trimethyl-L-lysyl-[protein] + 3 S-adenosyl-L-homocysteine + 3 H(+). Methylates ribosomal protein L11. This is Ribosomal protein L11 methyltransferase from Shewanella baltica (strain OS223).